A 610-amino-acid chain; its full sequence is Glutamine--fructose-6-phosphate aminotransferase [isomerizing] (610 aa).

Residue C2 is the Nucleophile; for GATase activity of the active site. Residues 2-219 (CGIVGAVAQR…EGDVAEITRR (218 aa)) enclose the Glutamine amidotransferase type-2 domain. 2 consecutive SIS domains span residues 287-427 (ADEL…LRGM) and 459-600 (LAEG…VDQP). The For Fru-6P isomerization activity role is filled by K605.

As to quaternary structure, homodimer.

The protein resides in the cytoplasm. It carries out the reaction D-fructose 6-phosphate + L-glutamine = D-glucosamine 6-phosphate + L-glutamate. Its function is as follows. Catalyzes the first step in hexosamine metabolism, converting fructose-6P into glucosamine-6P using glutamine as a nitrogen source. The chain is Glutamine--fructose-6-phosphate aminotransferase [isomerizing] from Pectobacterium atrosepticum (strain SCRI 1043 / ATCC BAA-672) (Erwinia carotovora subsp. atroseptica).